The following is a 123-amino-acid chain: Snaclec GPIB-binding protein subunit beta (123 aa).

Intrachain disulfides connect cysteine 2–cysteine 13, cysteine 30–cysteine 119, and cysteine 96–cysteine 111. One can recognise a C-type lectin domain in the interval 9–120 (YGGHCYKLFK…CTRLQYFVCE (112 aa)).

The protein belongs to the snaclec family. Heterodimer of subunits alpha and beta; disulfide-linked. Expressed by the venom gland.

The protein resides in the secreted. In terms of biological role, binds to platelet GPIb (subunit alpha) (GP1BA) and functions as a receptor blocker for vWF binding to GPIb. The platelet GPIb-binding site resides on the GPIB-BP subunit beta and not on the alpha subunit. At a final concentration of 104 nM totally abolishes vWF-dependent shear-induced platelet aggregation (SIPA) at a high shear stress, but had no effect on SIPA at a low shear stress. In Bothrops jararaca (Jararaca), this protein is Snaclec GPIB-binding protein subunit beta.